A 72-amino-acid polypeptide reads, in one-letter code: Translation initiation factor IF-1 (72 aa).

The S1-like domain maps to 1–72 (MAKEDTLEFP…TKGRINYRFK (72 aa)).

It belongs to the IF-1 family. Component of the 30S ribosomal translation pre-initiation complex which assembles on the 30S ribosome in the order IF-2 and IF-3, IF-1 and N-formylmethionyl-tRNA(fMet); mRNA recruitment can occur at any time during PIC assembly.

Its subcellular location is the cytoplasm. Functionally, one of the essential components for the initiation of protein synthesis. Stabilizes the binding of IF-2 and IF-3 on the 30S subunit to which N-formylmethionyl-tRNA(fMet) subsequently binds. Helps modulate mRNA selection, yielding the 30S pre-initiation complex (PIC). Upon addition of the 50S ribosomal subunit IF-1, IF-2 and IF-3 are released leaving the mature 70S translation initiation complex. The sequence is that of Translation initiation factor IF-1 from Ruegeria sp. (strain TM1040) (Silicibacter sp.).